The primary structure comprises 615 residues: MSIDVPERADLEQVRGRWRNAVAGVLSKSNRTDSAQLGDHPERLLDTQTADGFAIRALYTAFDELPEPPLPGQWPFVRGGDPLRDVHSGWKVAEAFPANGATADTNAAVLAALGEGVSALLIRVGESGVAPDRLTALLSGVYLNLAPVILDAGADYRPACDVMLALVAQLDPGQRDTLSIDLGADPLTASLRDRPAPPIEEVVAVASRAAGERGLRAITVDGPAFHNLGATAATELAATVAAAVAYLRVLTESGLVVSDALRQISFRLAADDDQFMTLAKMRALRQLWARVAEVVGDPGGGAAVVHAETSLPMMTQRDPWVNMLRCTLAAFGAGVGGADTVLVHPFDVAIPGGFPGTAAGFARRIARNTQLLLLEESHVGRVLDPAGGSWFVEELTDRLARRAWQRFQAIEARGGFVEAHDFLAGQIAECAARRADDIAHRRLAITGVNEYPNLGEPALPPGDPTSPVRRYAAGFEALRDRSDHHLARTGARPRVLLLPLGPLAEHNIRTTFATNLLASGGIEAIDPGTVDAGTVGNAVADAGSPSVAVICGTDARYRDEVADIVQAARAAGVSRVYLAGPEKALGDAAHRPDEFLTAKINVVQALSNLLTRLGA.

The protein belongs to the methylmalonyl-CoA mutase family. As to quaternary structure, heterodimer of an alpha and a beta chain. Adenosylcob(III)alamin is required as a cofactor.

The catalysed reaction is (R)-methylmalonyl-CoA = succinyl-CoA. It functions in the pathway metabolic intermediate metabolism; propanoyl-CoA degradation; succinyl-CoA from propanoyl-CoA: step 3/3. Catalyzes the isomerization of succinyl-CoA to methylmalonyl-CoA during synthesis of propionate from tricarboxylic acid-cycle intermediates. This Mycobacterium bovis (strain ATCC BAA-935 / AF2122/97) protein is Probable methylmalonyl-CoA mutase small subunit (mutA).